A 243-amino-acid polypeptide reads, in one-letter code: Biosynthetic peptidoglycan transglycosylase (243 aa).

Residues 21-43 (LLIVSLVSALMSVLQVIVFRFVD) traverse the membrane as a helical segment.

Belongs to the glycosyltransferase 51 family.

It is found in the cell inner membrane. It carries out the reaction [GlcNAc-(1-&gt;4)-Mur2Ac(oyl-L-Ala-gamma-D-Glu-L-Lys-D-Ala-D-Ala)](n)-di-trans,octa-cis-undecaprenyl diphosphate + beta-D-GlcNAc-(1-&gt;4)-Mur2Ac(oyl-L-Ala-gamma-D-Glu-L-Lys-D-Ala-D-Ala)-di-trans,octa-cis-undecaprenyl diphosphate = [GlcNAc-(1-&gt;4)-Mur2Ac(oyl-L-Ala-gamma-D-Glu-L-Lys-D-Ala-D-Ala)](n+1)-di-trans,octa-cis-undecaprenyl diphosphate + di-trans,octa-cis-undecaprenyl diphosphate + H(+). The protein operates within cell wall biogenesis; peptidoglycan biosynthesis. Its function is as follows. Peptidoglycan polymerase that catalyzes glycan chain elongation from lipid-linked precursors. In Xylella fastidiosa (strain Temecula1 / ATCC 700964), this protein is Biosynthetic peptidoglycan transglycosylase.